A 178-amino-acid chain; its full sequence is Ribulose bisphosphate carboxylase small subunit, chloroplastic 4 (178 aa).

Residues 1–54 (MASISSTVATVSRAAPAQANMVAPFTGLKSNAAFPATKKANDFSTLPSNGGRVQ) constitute a chloroplast transit peptide.

Belongs to the RuBisCO small chain family. As to quaternary structure, heterohexadecamer of 8 large and 8 small subunits.

Its subcellular location is the plastid. It is found in the chloroplast. Functionally, ruBisCO catalyzes two reactions: the carboxylation of D-ribulose 1,5-bisphosphate, the primary event in carbon dioxide fixation, as well as the oxidative fragmentation of the pentose substrate. Both reactions occur simultaneously and in competition at the same active site. Although the small subunit is not catalytic it is essential for maximal activity. The protein is Ribulose bisphosphate carboxylase small subunit, chloroplastic 4 of Flaveria pringlei.